The primary structure comprises 258 residues: Small ribosomal subunit protein uS2 (258 aa).

The protein belongs to the universal ribosomal protein uS2 family.

This chain is Small ribosomal subunit protein uS2, found in Streptococcus suis (strain 05ZYH33).